Reading from the N-terminus, the 228-residue chain is 2-phospho-L-lactate guanylyltransferase (228 aa).

This sequence belongs to the CofC family. In terms of assembly, homodimer.

The catalysed reaction is (2S)-2-phospholactate + GTP + H(+) = (2S)-lactyl-2-diphospho-5'-guanosine + diphosphate. Its pathway is cofactor biosynthesis; coenzyme F420 biosynthesis. Its function is as follows. Guanylyltransferase that catalyzes the activation of (2S)-2-phospholactate (2-PL) as (2S)-lactyl-2-diphospho-5'-guanosine, via the condensation of 2-PL with GTP. It is involved in the biosynthesis of coenzyme F420, a hydride carrier cofactor. The protein is 2-phospho-L-lactate guanylyltransferase of Methanosphaera stadtmanae (strain ATCC 43021 / DSM 3091 / JCM 11832 / MCB-3).